A 541-amino-acid chain; its full sequence is Arginine--tRNA ligase (541 aa).

Residues 119–129 carry the 'HIGH' region motif; the sequence is ANPTGPLHIGH.

Belongs to the class-I aminoacyl-tRNA synthetase family. As to quaternary structure, monomer.

The protein resides in the cytoplasm. The catalysed reaction is tRNA(Arg) + L-arginine + ATP = L-arginyl-tRNA(Arg) + AMP + diphosphate. The sequence is that of Arginine--tRNA ligase (argS) from Helicobacter pylori (strain ATCC 700392 / 26695) (Campylobacter pylori).